Reading from the N-terminus, the 404-residue chain is Argininosuccinate synthase (404 aa).

Residues 10–18 (AYSGGLDTS) and A37 each bind ATP. L-citrulline-binding residues include Y89 and S94. Residue G119 participates in ATP binding. 3 residues coordinate L-aspartate: T121, N125, and D126. N125 lines the L-citrulline pocket. 5 residues coordinate L-citrulline: R129, S178, S187, E263, and Y275.

The protein belongs to the argininosuccinate synthase family. Type 1 subfamily. As to quaternary structure, homotetramer.

The protein localises to the cytoplasm. The catalysed reaction is L-citrulline + L-aspartate + ATP = 2-(N(omega)-L-arginino)succinate + AMP + diphosphate + H(+). It participates in amino-acid biosynthesis; L-arginine biosynthesis; L-arginine from L-ornithine and carbamoyl phosphate: step 2/3. The protein is Argininosuccinate synthase of Photobacterium profundum (strain SS9).